Reading from the N-terminus, the 349-residue chain is Protein AMBP (349 aa).

Residues 1 to 19 (MLGLGTLFLLLAACPASRA) form the signal peptide. An N-linked (GlcNAc...) asparagine glycan is attached at N35. The 3-hydroxy-L-kynurenine site is built by C52 and K110. An intrachain disulfide couples C90 to C187. N114 carries N-linked (GlcNAc...) asparagine glycosylation. 2 residues coordinate 3-hydroxy-L-kynurenine: K136 and K148. O-linked (Xyl...) (chondroitin sulfate) serine glycosylation occurs at S214. 6 disulfides stabilise this stretch: C230–C280, C239–C263, C255–C276, C286–C336, C295–C319, and C311–C332. BPTI/Kunitz inhibitor domains follow at residues 230 to 280 (CQLS…LQTC) and 286 to 336 (CSLP…KEYC).

The protein in the N-terminal section; belongs to the calycin superfamily. Lipocalin family. As to quaternary structure, monomer. Homodimer. In plasma, it occurs as a monomer or dimer and in covalently-linked complexes with immunoglobulin A (IgA), ALB/albumin and F2/prothrombin. Chromophore-bound alpha-1-microglobulin interacts with the constant region of immunoglobulin A. Chromophore-bound alpha-1-microglobulin interacts with ALB with molar ratio 2:1 and 1:1; this interaction does not prevent fatty acid binding to ALB. Interacts with F2/prothrombin (via N-terminus) with molar ratio 2:1 and 1:1; this interaction does not prevent the activation of prothrombin to thrombin. Interacts with NDUFAB1, a subunit of mitochondrial complex I. Interacts with FN1. In terms of assembly, I-alpha-I plasma protease inhibitors are assembled from one or two heavy chains (HC) and one light chain, bikunin. Inter-alpha-inhibitor (I-alpha-I) is composed of ITIH1/HC1, ITIH2/HC2 and bikunin, and pre-alpha-inhibitor (P-alpha-I) of ITIH3/HC3 and bikunin. Interacts with TNFAIP6 (via Link domain). Monomer. Also occurs as a complex with tryptase in mast cells. Post-translationally, the precursor is proteolytically processed into separately functioning proteins. In terms of processing, 3-hydroxykynurenine, an oxidized tryptophan metabolite that is common in biological fluids, reacts with Cys-53, Lys-111, Lys-137, and Lys-149 to form heterogeneous polycyclic chromophores including hydroxanthommatin. The reaction by alpha-1-microglobulin is autocatalytic; the human protein forms chromophore even when expressed in insect and bacterial cells. The chromophore can react with accessible cysteines forming non-reducible thioether cross-links with other molecules of alpha-1-microglobulin or with other proteins such as Ig alpha-1 chain C region 'Cys-352'. Heavy chains are interlinked with bikunin via a chondroitin 4-sulfate bridge to the C-terminal aspartate. Post-translationally, proteolytically cleaved by PRSS3 at Kunitz domain 2. Expressed by the liver and secreted in plasma.

The protein resides in the secreted. It is found in the endoplasmic reticulum. The protein localises to the cytoplasm. Its subcellular location is the cytosol. It localises to the cell membrane. The protein resides in the nucleus membrane. It is found in the mitochondrion inner membrane. The protein localises to the extracellular space. Its subcellular location is the extracellular matrix. Functionally, antioxidant and tissue repair protein with reductase, heme-binding and radical-scavenging activities. Removes and protects against harmful oxidants and repairs macromolecules in intravascular and extravascular spaces and in intracellular compartments. Intravascularly, plays a regulatory role in red cell homeostasis by preventing heme- and reactive oxygen species-induced cell damage. Binds and degrades free heme to protect fetal and adult red blood cells from hemolysis. Reduces extracellular methemoglobin, a Fe3+ (ferric) form of hemoglobin that cannot bind oxygen, back to the Fe2+ (ferrous) form deoxyhemoglobin, which has oxygen-carrying potential. Upon acute inflammation, inhibits oxidation of low-density lipoprotein particles by MPO and limits vascular damage. Extravascularly, protects from oxidation products formed on extracellular matrix structures and cell membranes. Catalyzes the reduction of carbonyl groups on oxidized collagen fibers and preserves cellular and extracellular matrix ultrastructures. Importantly, counteracts the oxidative damage at blood-placenta interface, preventing leakage of free fetal hemoglobin into the maternal circulation. Intracellularly, has a role in maintaining mitochondrial redox homeostasis. Bound to complex I of the respiratory chain of mitochondria, may scavenge free radicals and preserve mitochondrial ATP synthesis. Protects renal tubule epithelial cells from heme-induced oxidative damage to mitochondria. Reduces cytochrome c from Fe3+ (ferric) to the Fe2+ (ferrous) state through formation of superoxide anion radicals in the presence of ascorbate or NADH/NADPH electron donor cofactors, ascorbate being the preferred cofactor. Has a chaperone role in facilitating the correct folding of bikunin in the endoplasmic reticulum compartment. Kunitz-type serine protease inhibitor and structural component of extracellular matrix with a role in extracellular space remodeling and cell adhesion. Among others, has antiprotease activity toward kallikrein, a protease involved in airway inflammation; inhibits GZMK/granzyme, a granule-stored serine protease involved in NK and T cell cytotoxic responses; and inhibits PLG/plasmin, a protease required for activation of matrix metalloproteinases. As part of I-alpha-I complex, provides for the heavy chains to be transferred from I-alpha-I complex to hyaluronan in the presence of TNFAIP6, in a dynamic process that releases free bikunin and remodels extracellular matrix proteoglycan structures. Free bikunin, but not its heavy chain-bound form, acts as a potent protease inhibitor in airway secretions. Part of hyaluronan-rich extracellular matrix that surrounds oocyte during cumulus oophorus expansion, an indispensable process for proper ovulation. Also inhibits calcium oxalate crystallization. Its function is as follows. Kunitz-type serine protease inhibitor. Has high catalytic efficiency for F10/blood coagulation factor Xa and may act as an anticoagulant by inhibiting prothrombin activation. Inhibits trypsin and mast cell CMA1/chymase and tryptase proteases. This Mesocricetus auratus (Golden hamster) protein is Protein AMBP (AMBP).